Here is a 208-residue protein sequence, read N- to C-terminus: Thymidylate kinase (208 aa).

10–17 (GPDGSGKT) contributes to the ATP binding site.

Belongs to the thymidylate kinase family.

The catalysed reaction is dTMP + ATP = dTDP + ADP. Phosphorylation of dTMP to form dTDP in both de novo and salvage pathways of dTTP synthesis. This is Thymidylate kinase from Listeria welshimeri serovar 6b (strain ATCC 35897 / DSM 20650 / CCUG 15529 / CIP 8149 / NCTC 11857 / SLCC 5334 / V8).